The primary structure comprises 205 residues: Holliday junction branch migration complex subunit RuvA (205 aa).

Residues 1-62 are domain I; the sequence is MFEYVTGYVE…EDIMALYGFK (62 aa). The segment at 63–141 is domain II; it reads TREERLLFTK…DVVPDVFVDL (79 aa). The segment at 142 to 152 is flexible linker; it reads FSDEERFDEKK. Positions 153–205 are domain III; it reads GSSTELDEALEALRALGYAEREINRVLPELLKESLTTDQYIKKALSLLLNGKR.

It belongs to the RuvA family. Homotetramer. Forms an RuvA(8)-RuvB(12)-Holliday junction (HJ) complex. HJ DNA is sandwiched between 2 RuvA tetramers; dsDNA enters through RuvA and exits via RuvB. An RuvB hexamer assembles on each DNA strand where it exits the tetramer. Each RuvB hexamer is contacted by two RuvA subunits (via domain III) on 2 adjacent RuvB subunits; this complex drives branch migration. In the full resolvosome a probable DNA-RuvA(4)-RuvB(12)-RuvC(2) complex forms which resolves the HJ.

Its subcellular location is the cytoplasm. Its function is as follows. The RuvA-RuvB-RuvC complex processes Holliday junction (HJ) DNA during genetic recombination and DNA repair, while the RuvA-RuvB complex plays an important role in the rescue of blocked DNA replication forks via replication fork reversal (RFR). RuvA specifically binds to HJ cruciform DNA, conferring on it an open structure. The RuvB hexamer acts as an ATP-dependent pump, pulling dsDNA into and through the RuvAB complex. HJ branch migration allows RuvC to scan DNA until it finds its consensus sequence, where it cleaves and resolves the cruciform DNA. The chain is Holliday junction branch migration complex subunit RuvA from Bacillus cytotoxicus (strain DSM 22905 / CIP 110041 / 391-98 / NVH 391-98).